The primary structure comprises 264 residues: Meiotic recombination protein REC102 (264 aa).

The protein belongs to the TOP6B-like family. In terms of assembly, interacts with REC104; seems to form a functional unit with REC104. REC102-REC104 interacts with SKI8-SPO11 and this interaction is required for proper subcellular location of the proteins during the initiation of recombination. Interacts with MEI4, REC114 and SPO11.

It localises to the nucleus. Its function is as follows. Required for formation of the SPO11-mediated double-strand breaks (DSBs) that initiate meiotic recombination. May mediate the interaction between SPO11 subunits during meiosis. Also needed for homolog chromosome pairing, synaptonemal complex formation, and for the proper timing of the first meiotic division. Not required for mitosis and mitotic DNA repair mechanisms. This chain is Meiotic recombination protein REC102, found in Saccharomyces cerevisiae (strain ATCC 204508 / S288c) (Baker's yeast).